The following is a 123-amino-acid chain: Large ribosomal subunit protein bL12 (123 aa).

This sequence belongs to the bacterial ribosomal protein bL12 family. In terms of assembly, homodimer. Part of the ribosomal stalk of the 50S ribosomal subunit. Forms a multimeric L10(L12)X complex, where L10 forms an elongated spine to which 2 to 4 L12 dimers bind in a sequential fashion. Binds GTP-bound translation factors.

Its function is as follows. Forms part of the ribosomal stalk which helps the ribosome interact with GTP-bound translation factors. Is thus essential for accurate translation. The chain is Large ribosomal subunit protein bL12 from Albidiferax ferrireducens (strain ATCC BAA-621 / DSM 15236 / T118) (Rhodoferax ferrireducens).